Reading from the N-terminus, the 78-residue chain is Calcium/calmodulin-dependent protein kinase II inhibitor 1 (78 aa).

Positions 41 to 68 are CAMK2 inhibitory domain; it reads NKRPPKLGQIGRSKRVVIEDDRIDDVLK.

The protein belongs to the CAMK2N family. Interacts with CAMK2B; the presence of Ca(2+)/calmodulin increases the interaction but is not essential. Interacts with CAMK2A; this interaction requires CAMK2A activation by Ca(2+).

The protein resides in the synapse. Its subcellular location is the cell projection. It is found in the dendrite. The protein localises to the postsynaptic density. Functionally, potent and specific inhibitor of CaM-kinase II (CAMK2). Plays a role in the maintenance of long-term retrieval-induced memory in response to contextual fear. Modulates blood pressure and vascular reactivity via regulation of CAMK2 activity in addition to regulation of left ventricular mass. Mediates the NLRP3 inflammasome in cardiomyocytes via acting as an inhibitor of the MAPK14/p38 and MAPK8/JNK pathways, thereby regulating ventricular remodeling and cardiac rhythm post-myocardial infarction. Negatively effects insulin sensitivity and promotes lipid formation in adipose tissues independent of CAMK2 signaling. This is Calcium/calmodulin-dependent protein kinase II inhibitor 1 (CAMK2N1) from Bos taurus (Bovine).